The primary structure comprises 145 residues: D-aminoacyl-tRNA deacylase (145 aa).

The short motif at 137–138 is the Gly-cisPro motif, important for rejection of L-amino acids element; the sequence is GP.

This sequence belongs to the DTD family. Homodimer.

Its subcellular location is the cytoplasm. It catalyses the reaction glycyl-tRNA(Ala) + H2O = tRNA(Ala) + glycine + H(+). The catalysed reaction is a D-aminoacyl-tRNA + H2O = a tRNA + a D-alpha-amino acid + H(+). Functionally, an aminoacyl-tRNA editing enzyme that deacylates mischarged D-aminoacyl-tRNAs. Also deacylates mischarged glycyl-tRNA(Ala), protecting cells against glycine mischarging by AlaRS. Acts via tRNA-based rather than protein-based catalysis; rejects L-amino acids rather than detecting D-amino acids in the active site. By recycling D-aminoacyl-tRNA to D-amino acids and free tRNA molecules, this enzyme counteracts the toxicity associated with the formation of D-aminoacyl-tRNA entities in vivo and helps enforce protein L-homochirality. This is D-aminoacyl-tRNA deacylase from Shigella dysenteriae serotype 1 (strain Sd197).